The chain runs to 341 residues: UDP-N-acetylenolpyruvoylglucosamine reductase (341 aa).

Positions 15–185 (VTQSCLSLIE…TAVGLRLPKT (171 aa)) constitute an FAD-binding PCMH-type domain. Arginine 161 is a catalytic residue. The active-site Proton donor is serine 231. Glutamate 327 is an active-site residue.

The protein belongs to the MurB family. FAD serves as cofactor.

The protein localises to the cytoplasm. It catalyses the reaction UDP-N-acetyl-alpha-D-muramate + NADP(+) = UDP-N-acetyl-3-O-(1-carboxyvinyl)-alpha-D-glucosamine + NADPH + H(+). Its pathway is cell wall biogenesis; peptidoglycan biosynthesis. Its function is as follows. Cell wall formation. This is UDP-N-acetylenolpyruvoylglucosamine reductase from Shewanella oneidensis (strain ATCC 700550 / JCM 31522 / CIP 106686 / LMG 19005 / NCIMB 14063 / MR-1).